Reading from the N-terminus, the 500-residue chain is uncharacterized protein (500 aa).

The first 20 residues, 1–20 (MHSIIFKAAVALLGVSTAAG), serve as a signal peptide directing secretion. A glycan (N-linked (GlcNAc...) asparagine) is linked at asparagine 43. Positions 60 to 232 (TALRPDCIIA…TAFTVKTHTQ (173 aa)) constitute an FAD-binding PCMH-type domain. The residue at position 98 (histidine 98) is a Pros-8alpha-FAD histidine. Asparagine 194, asparagine 201, asparagine 246, asparagine 299, and asparagine 414 each carry an N-linked (GlcNAc...) asparagine glycan.

This sequence belongs to the oxygen-dependent FAD-linked oxidoreductase family. It depends on FAD as a cofactor.

Its subcellular location is the secreted. This is an uncharacterized protein from Arthroderma benhamiae (strain ATCC MYA-4681 / CBS 112371) (Trichophyton mentagrophytes).